The following is a 378-amino-acid chain: Neutral protease 2 homolog ARB_04336 (378 aa).

The first 19 residues, 1 to 19 (MKFFTALAAVGALLAPAVA), serve as a signal peptide directing secretion. Positions 20-186 (LPTPASEASH…DYFSKGLDKR (167 aa)) are excised as a propeptide. Disulfide bonds link Cys-192-Cys-262 and Cys-269-Cys-287. Position 311 (His-311) interacts with Zn(2+). Glu-312 is a catalytic residue. The Zn(2+) site is built by His-315 and Asp-326.

Belongs to the peptidase M35 family. Zn(2+) is required as a cofactor.

Its subcellular location is the secreted. It carries out the reaction Preferential cleavage of bonds with hydrophobic residues in P1'. Also 3-Asn-|-Gln-4 and 8-Gly-|-Ser-9 bonds in insulin B chain.. In terms of biological role, secreted metalloproteinase that allows assimilation of proteinaceous substrates. Shows high activities on basic nuclear substrates such as histone and protamine. May be involved in virulence. The protein is Neutral protease 2 homolog ARB_04336 of Arthroderma benhamiae (strain ATCC MYA-4681 / CBS 112371) (Trichophyton mentagrophytes).